The chain runs to 60 residues: Large ribosomal subunit protein uL30 (60 aa).

It belongs to the universal ribosomal protein uL30 family. In terms of assembly, part of the 50S ribosomal subunit.

The chain is Large ribosomal subunit protein uL30 from Polaromonas sp. (strain JS666 / ATCC BAA-500).